A 662-amino-acid polypeptide reads, in one-letter code: MGKYKILVVTGDSLLAGSTNLVQLWLVGEHAEADLGKQLRPLRGRKTELEIDVPLHLGRLLVVKLRKHKGLLDSDWFCKWITVQGPGIQGEAFFPCYSWVQGKETIYLPEGTALKVNDDTKNLFRKYREQELEDRRNVYRWGSWKEGLILPIAGSTERDLPRNQRFMEDKDLDFSLSLAKVLKDFAIKGTLDFVSRVQHLEDYQKVFPHSKTALAGRVRDSWKEDALFGYQFLNGANPMLLRRSKRLPARLVLPPGMEDLQTQLEKELKAGSLFEADFSLLDGVKPNVIIFKQQHVAAPLVMLKLQSDGRLLPMVIQLQPPRHGCPPPLLFLPSDPPMAWLLAKIWVRSSDFQVHQLQSHLLRGHLMAEVISVATMRSLPSLHPIYKLLAPHFRYTMEINTLARNNLVSEWGIFDLVVSTGSGGHVDILQRATACLTYRSFCPPDDLADRGLLDVKSSLYARDALRLWEIISRYVGRMVELFYKNDREVKEDPELQVWCREVTEIGLLGAQDRGFPLSLESRAQLCRFVTMCIFTCTGQHASTHLGQLDWYSWIPNGPCTMRKPPPTSKNVTEGDILDALPCLQQARMQITFTKFLGRHQPVMVALGQHKEEYFSDPGARAVLKQFQEELAVMDKEIEVRNASLDLPYEYLRPSMVENSVTI.

Positions 2 to 114 constitute a PLAT domain; it reads GKYKILVVTG…TIYLPEGTAL (113 aa). Residues 114-662 form the Lipoxygenase domain; the sequence is LKVNDDTKNL…PSMVENSVTI (549 aa). The Fe cation site is built by His360, His365, His540, His544, and Ile662.

The protein belongs to the lipoxygenase family. Fe cation is required as a cofactor.

The protein resides in the cytoplasm. The enzyme catalyses (5Z,8Z,11Z,14Z)-eicosatetraenoate + O2 = (12S)-hydroperoxy-(5Z,8Z,10E,14Z)-eicosatetraenoate. It carries out the reaction 1-O-methyl-(9Z,12Z)-octadecadienoate + O2 = 1-O-methyl-(13S)-hydroperoxy-(9Z,11E)-octadecadienoate. The catalysed reaction is (8Z,11Z,14Z)-eicosatrienoate + O2 = (12S)-hydroperoxy-(8Z,10E,14Z)-eicosatrienoate. It catalyses the reaction (5Z,8Z,11Z)-eicosatrienoate + O2 = (12S)-hydroperoxy-(5Z,8Z,10E)-eicosatrienoate. The enzyme catalyses 1-O-methyl-(5Z,8Z,11Z,14Z)-eicosatetraenoate + O2 = 1-O-methyl-(12S)-hydroperoxy-(5Z,8Z,10E,14Z)-eicosatetraenoate. It carries out the reaction (9Z,12Z)-octadecadienoate + O2 = (13S)-hydroperoxy-(9Z,11E)-octadecadienoate. The catalysed reaction is (4Z,7Z,10Z,13Z,16Z,19Z)-docosahexaenoate + O2 = (14S)-hydroperoxy-(4Z,7Z,10Z,12E,16Z,19Z)-docosahexaenoate. The protein operates within lipid metabolism; hydroperoxy eicosatetraenoic acid biosynthesis. Arachidonate 12-lipoxygenase activity is decreased when the pH decreases from 7.4 to 6.0. Its function is as follows. Catalyzes the regio and stereo-specific incorporation of a single molecule of dioxygen into free and esterified polyunsaturated fatty acids generating lipid hydroperoxides that can be further reduced to the corresponding hydroxy species. Shows increasing catalytic activity within the series arachidonic acid &lt; 5,8,11-eicosatrienoic acid &lt; linoleic acid &lt; 8,11,14-eicosatrienoic acid. This chain is Polyunsaturated fatty acid (12S)/(13S)-lipoxygenase, epidermal-type, found in Rattus norvegicus (Rat).